The chain runs to 343 residues: Ferredoxin--NADP reductase (343 aa).

Residues D31, K39, Y43, V83, I118, D285, and S326 each coordinate FAD.

It belongs to the ferredoxin--NADP reductase type 2 family. As to quaternary structure, homodimer. The cofactor is FAD.

The catalysed reaction is 2 reduced [2Fe-2S]-[ferredoxin] + NADP(+) + H(+) = 2 oxidized [2Fe-2S]-[ferredoxin] + NADPH. In Staphylococcus saprophyticus subsp. saprophyticus (strain ATCC 15305 / DSM 20229 / NCIMB 8711 / NCTC 7292 / S-41), this protein is Ferredoxin--NADP reductase.